A 148-amino-acid polypeptide reads, in one-letter code: Protein Turandot Z (148 aa).

The signal sequence occupies residues 1-23 (MYFAIRLSFVLAVLFCLTGNGSA).

This sequence belongs to the Turandot family.

The protein resides in the secreted. Its function is as follows. A humoral factor that may play a role in stress tolerance. The polypeptide is Protein Turandot Z (Drosophila sechellia (Fruit fly)).